Reading from the N-terminus, the 231-residue chain is Eukaryotic translation initiation factor 4E-1 (231 aa).

2 EIF4G-binding regions span residues 56 to 59 (HPLE) and 66 to 102 (FDNSTTKSRQTAWGSSLRNLYTFSTVEDFWGAYNNIH). MRNA is bound by residues 74–79 (RQTAWG), lysine 106, and 124–125 (WE). A disulfide bridge links cysteine 129 with cysteine 167. The interval 150–159 (YTLLAMIGHQ) is EIF4G-binding. MRNA contacts are provided by residues 174–179 (RAKGEK) and 219–223 (KRLDR).

It belongs to the eukaryotic initiation factor 4E family. As to quaternary structure, EIF4F is a multi-subunit complex, the composition of which varies with external and internal environmental conditions. It is composed of at least EIF4A, EIF4E and EIF4G. EIF4E is also known to interact with other partners. In higher plants two isoforms of EIF4F have been identified, named isoform EIF4F and isoform EIF(iso)4F. Isoform EIF4F has subunits p220 and p26, whereas isoform EIF(iso)4F has subunits p82 and p28. (Microbial infection) Interacts with potyvirus viral genome-linked protein (VPg); this interaction is possible in susceptible hosts but impaired in resistant plants. Post-translationally, according to the redox status, the Cys-129-Cys-167 disulfide bridge may have a role in regulating protein function by affecting its ability to bind capped mRNA.

The protein resides in the nucleus. Its subcellular location is the cytoplasm. In terms of biological role, component of the protein complex eIF4F, which is involved in the recognition of the mRNA cap, ATP-dependent unwinding of 5'-terminal secondary structure and recruitment of mRNA to the ribosome. Recognizes and binds the 7-methylguanosine-containing mRNA cap during an early step in the initiation of protein synthesis and facilitates ribosome binding by inducing the unwinding of the mRNAs secondary structures. Key component of recessive resistance to potyviruses. Functionally, (Microbial infection) Susceptibility host factor required for viral infection (e.g. pepper mottle virus (PepMoV), potato virus Y (PVY) and tobacco etch virus (TEV)) by recruiting viral RNAs to the host ribosomal complex via an interaction with viral genome-linked protein (VPg). The chain is Eukaryotic translation initiation factor 4E-1 from Solanum habrochaites (Wild tomato).